Here is a 402-residue protein sequence, read N- to C-terminus: METLKTRNIQVEAIKQSPTASREVEIVERKGIGHPDSVADGIAEAVSRSLSKYYIKNYGRILHHNTDQVEVVGGQSDPRFGGGVVLEPSYILISGRATSTVNGERIPVKSIAIKAAKDYLREHFRDLEIDSDVMIDSRIGNGSIDLRGLYDTRKFKANDTSFGVGFAPFTDTETIVKATEKYINGDLKKSLPQIGYDIKVMGFRKNRTINLTVAAAYVDKYVKDPDEYYSVKEELVNKITDNALKYTNNDVQVFVNTGDIKDDKVYYLTVTGLSMENGDDGSVGRGNRVNGLITPYRPMSMEAAAGKNPVTHVGKLYNVLSNIIANDIVKEEGGDIKEVLVRIVSQIGRPVDEPHVASIQVIYEDNVDPSKHKNNITAIADDRIAHISDLTNMFVDGKLDVF.

G140–D145 provides a ligand contact to ATP.

Belongs to the AdoMet synthase 2 family. Mg(2+) is required as a cofactor.

The catalysed reaction is L-methionine + ATP + H2O = S-adenosyl-L-methionine + phosphate + diphosphate. Its pathway is amino-acid biosynthesis; S-adenosyl-L-methionine biosynthesis; S-adenosyl-L-methionine from L-methionine: step 1/1. In terms of biological role, catalyzes the formation of S-adenosylmethionine from methionine and ATP. The polypeptide is S-adenosylmethionine synthase (Picrophilus torridus (strain ATCC 700027 / DSM 9790 / JCM 10055 / NBRC 100828 / KAW 2/3)).